The sequence spans 195 residues: MIGFAVFSSFNRFTTIFVCVLLCVVYLLSYASGEYDGRDSSSGSNNDRAPSNEFGSCTDGKCIKRTSQDITSGMWFGPRLGRRRRADRKPEINSDIEAFANAFEEPHWAIVTIPETEKRQITQFTPRLGRESGEDYFSYGFPKDQEELYTEEQIYLPLFASRLGRRVPWTPSPRLGRQLHNIVDKPRQNFNDPRF.

The signal sequence occupies residues 1-33 (MIGFAVFSSFNRFTTIFVCVLLCVVYLLSYASG). A propeptide spanning residues 34 to 63 (EYDGRDSSSGSNNDRAPSNEFGSCTDGKCI) is cleaved from the precursor. Position 80 is a leucine amide (Leu80). Residues 86–117 (ADRKPEINSDIEAFANAFEEPHWAIVTIPETE) constitute a propeptide that is removed on maturation. Pyrrolidone carboxylic acid is present on Gln120. Residue Leu128 is modified to Leucine amide. The propeptide occupies 131–153 (ESGEDYFSYGFPKDQEELYTEEQ). Leu163 and Leu175 each carry leucine amide. Residues 178 to 195 (QLHNIVDKPRQNFNDPRF) constitute a propeptide that is removed on maturation.

The protein belongs to the pyrokinin family.

It localises to the secreted. Its function is as follows. A hormone that controls sex pheromone production in females and pheromone responsiveness in male. Also mediates visceral muscle contractile activity (myotropic activity). The sequence is that of PBAN-type neuropeptides from Apis mellifera (Honeybee).